Here is a 6885-residue protein sequence, read N- to C-terminus: Nesprin-2 (6885 aa).

An actin-binding region spans residues 1-286 (MASSPELPTE…YVAQFLQYSK (286 aa)). The Cytoplasmic portion of the chain corresponds to 1 to 6834 (MASSPELPTE…QRSFLSRVVR (6834 aa)). Calponin-homology (CH) domains lie at 31–136 (DTQK…LHFH) and 181–286 (MSAR…QYSK). 7 Spectrin repeats span residues 297–378 (GKVK…HQIN), 379–472 (AWKI…RINN), 473–575 (ILEK…KNIY), 576–680 (NVKS…KQDQ), 735–838 (VAKD…KNLT), 839–932 (DVSP…LHHE), and 933–1034 (LSLY…KCAS). A coiled-coil region spans residues 297–6782 (GKVKDAMGWL…PASPLPSFDE (6486 aa)). Residue Ser-841 is modified to Phosphoserine. At Lys-955 the chain carries N6-acetyllysine. Residues 1042-1059 (PTAGGTSKNEGTITTSEN) are compositionally biased toward polar residues. The tract at residues 1042-1084 (PTAGGTSKNEGTITTSENRGGDPHSEAPFAKSDNQPSTEKAME) is disordered. Spectrin repeat units follow at residues 1121–1212 (TYRD…TLNT), 1263–1323 (NIQD…DTLK), 1324–1419 (ALED…YGVQ), 1420–1524 (EEFT…ALVT), 1525–1636 (ECLE…KTED), 1637–1738 (YYEN…TGES), 1739–1830 (NCHA…TKKS), 1831–1938 (VLQD…AKEL), 1939–2036 (EDSL…EEED), 2037–2132 (KLLP…LAST), 2133–2243 (YLSH…SVQN), and 2244–2360 (LDGH…LNSI). The segment covering 2368 to 2382 (EKKGKFTLPGREKQA) has biased composition (basic and acidic residues). Residues 2368 to 2394 (EKKGKFTLPGREKQATSDVQESTQESA) form a disordered region. Positions 2383-2393 (TSDVQESTQES) are enriched in polar residues. Spectrin repeat units follow at residues 2432–2513 (DERK…TLKK), 2514–2620 (NKES…KYSQ), 2621–2717 (QVVE…ETLE), 2718–2831 (PLHL…QLEF), 2832–2933 (KLEE…FIQN), 2934–3036 (TCNE…EKIK), 3037–3142 (QLDT…NMVL), 3143–3248 (ELSP…DLRT), 3249–3352 (NVLN…AQET), 3353–3465 (EAER…MWCE), 3466–3573 (ELKQ…KVQK), 3574–3679 (NKEL…SNEV), 3680–3777 (LKSS…ECRT), 3778–3880 (SQLN…KIME), 3881–3986 (SLPQ…VTQE), and 3987–4086 (QNEL…LPAV). Ser-2781 carries the post-translational modification Phosphoserine. Composition is skewed to basic and acidic residues over residues 4073–4083 (QEQEGVERDRL) and 4093–4102 (VAERDASERK). 4 disordered regions span residues 4073 to 4162 (QEQE…SGTI), 4184 to 4232 (DSLN…KTRP), 4335 to 4363 (EKHSEDQHPTILKKSSEPEHQEALQPVNL), and 4416 to 4448 (HDNDTTQESSASNQASSPENDVPDSILSPQGQN). Position 4108 is a phosphoserine (Ser-4108). Basic and acidic residues-rich tracts occupy residues 4122–4134 (SSVKSDNGDEKAE) and 4144–4155 (WKHDKDMEEDRA). A Spectrin 36 repeat occupies 4229–4348 (KTRPEPTEVL…EDQHPTILKK (120 aa)). The segment covering 4335–4356 (EKHSEDQHPTILKKSSEPEHQE) has biased composition (basic and acidic residues). Over residues 4421–4434 (TQESSASNQASSPE) the composition is skewed to polar residues. Spectrin repeat units follow at residues 4520–4639 (NMTE…RSYQ), 4640–4727 (NEIK…RARY), 4728–4837 (TELS…QSLL), 4838–4943 (QKWE…QALL), 4944–5051 (KHLL…QEKL), 5052–5164 (HQLQ…KIQH), 5165–5266 (LEQL…TQVN), 5267–5391 (QLKT…KAYS), 5392–5487 (NAHG…MLLV), 5488–5589 (KANE…CSEL), 5590–5704 (QGIG…QWQD), 5705–5799 (FTTS…PQLA), 5800–5907 (EMIK…RVAI), 5908–6017 (RKQE…VKKL), 6018–6135 (KETF…EETW), 6136–6243 (RLWQ…LRHF), and 6244–6355 (TNQR…PGLE). The residue at position 5785 (Ser-5785) is a Phosphoserine. Residues 6354–6367 (LEDEKEASENETDM) are compositionally biased toward acidic residues. The segment at 6354 to 6508 (LEDEKEASEN…GTDGGKEGPR (155 aa)) is disordered. Ser-6361, Ser-6384, Ser-6411, Ser-6428, Ser-6429, Ser-6430, and Ser-6459 each carry phosphoserine. The segment covering 6368 to 6384 (EDPREIQTDSWRKRGES) has biased composition (basic and acidic residues). Spectrin repeat units lie at residues 6461-6549 (SCPE…KLKI), 6550-6665 (KQNL…QCQD), and 6666-6782 (FHQL…SFDE). Residues 6463-6474 (PEHHYKQMEGDR) show a composition bias toward basic and acidic residues. The segment covering 6477–6489 (PPVPPASSTPYKP) has biased composition (pro residues). A compositionally biased stretch (low complexity) spans 6490–6499 (PYGKLLLPPG). Residues 6769–6824 (GTQNPASPLPSFDEVDSGDQPPATSVPAPRAKQFRAVRTTEGEEETESRVPGSTRP) are disordered. Positions 6826 to 6885 (RSFLSRVVRAALPLQLLLLLLLLLACLLPSSEEDYSCTQANNFARSFYPMLRYTNGPPPT) constitute a KASH domain. The chain crosses the membrane as a helical; Anchor for type IV membrane protein span at residues 6835–6855 (AALPLQLLLLLLLLLACLLPS). Over 6856–6885 (SEEDYSCTQANNFARSFYPMLRYTNGPPPT) the chain is Perinuclear space. Positions 6872–6885 (FYPMLRYTNGPPPT) are sufficient for interaction with SUN2.

This sequence belongs to the nesprin family. As to quaternary structure, core component of LINC complexes which are composed of inner nuclear membrane SUN domain-containing proteins coupled to outer nuclear membrane KASH domain-containing nesprins. SUN and KASH domain-containing proteins seem to bind each other promiscuously; however, some LINC complex constituents are tissue- or cell type-specific. At least SUN1/2-containing core LINC complexes are proposed to be hexameric composed of three protomers of each KASH and SUN domain-containing protein. The SUN2:SYNE2/KASH2 complex is a heterohexamer; the homotrimeric cloverleave-like conformation of the SUN domain is a prerequisite for LINC complex formation in which three separate SYNE2/KASH2 peptides bind at the interface of adjacent SUN domains. Interacts with EMD, LMNA, MKS3 and F-actin via its N-terminal domain. Interacts with DCTN1 and DYNC1I1/2; suggesting the association with the dynein-dynactin motor complex. Associates with kinesin motor complexes. Interacts with TMEM67. Interacts (via KASH domain) with TMEM258. Interacts with BROX; this interaction promotes SYN2 ubiquitination and facilitates the relaxation of mechanical stress imposed by compressive actin fibers at the rupture site. In terms of processing, the disulfid bond with SUN2 is required for stability of the SUN2:SYNE2/KASH2 LINC complex under tensile forces though not required for the interaction. Ubiquitinated, targeting it for degradation. In terms of tissue distribution, widely expressed, with higher level in kidney, adult and fetal liver, stomach and placenta. Weakly expressed in skeletal muscle and brain. Isoform 5 is highly expressed in pancreas, skeletal muscle and heart.

It localises to the nucleus outer membrane. Its subcellular location is the sarcoplasmic reticulum membrane. It is found in the cell membrane. The protein localises to the cytoplasm. The protein resides in the cytoskeleton. It localises to the mitochondrion. Its subcellular location is the nucleus. It is found in the nucleoplasm. The protein localises to the myofibril. The protein resides in the sarcomere. It localises to the z line. Its subcellular location is the cell junction. It is found in the focal adhesion. Its function is as follows. Multi-isomeric modular protein which forms a linking network between organelles and the actin cytoskeleton to maintain the subcellular spatial organization. As a component of the LINC (LInker of Nucleoskeleton and Cytoskeleton) complex involved in the connection between the nuclear lamina and the cytoskeleton. The nucleocytoplasmic interactions established by the LINC complex play an important role in the transmission of mechanical forces across the nuclear envelope and in nuclear movement and positioning. Specifically, SYNE2 and SUN2 assemble in arrays of transmembrane actin-associated nuclear (TAN) lines which are bound to F-actin cables and couple the nucleus to retrograde actin flow during actin-dependent nuclear movement. May be involved in nucleus-centrosome attachment. During interkinetic nuclear migration (INM) at G2 phase and nuclear migration in neural progenitors its LINC complex association with SUN1/2 and probable association with cytoplasmic dynein-dynactin motor complexes functions to pull the nucleus toward the centrosome; SYNE1 and SYNE2 may act redundantly. During INM at G1 phase mediates respective LINC complex association with kinesin to push the nucleus away from the centrosome. Involved in nuclear migration in retinal photoreceptor progenitors. Required for centrosome migration to the apical cell surface during early ciliogenesis. Facilitates the relaxation of mechanical stress imposed by compressive actin fibers at the rupture site through its nteraction with SYN2. In Homo sapiens (Human), this protein is Nesprin-2.